Consider the following 186-residue polypeptide: Potassium-transporting ATPase KdpC subunit (186 aa).

Residues 10 to 30 (LTIITMVLCGFLFPLAITLIG) traverse the membrane as a helical segment.

Belongs to the KdpC family. In terms of assembly, the system is composed of three essential subunits: KdpA, KdpB and KdpC.

It localises to the cell membrane. In terms of biological role, part of the high-affinity ATP-driven potassium transport (or Kdp) system, which catalyzes the hydrolysis of ATP coupled with the electrogenic transport of potassium into the cytoplasm. This subunit acts as a catalytic chaperone that increases the ATP-binding affinity of the ATP-hydrolyzing subunit KdpB by the formation of a transient KdpB/KdpC/ATP ternary complex. This Staphylococcus aureus (strain bovine RF122 / ET3-1) protein is Potassium-transporting ATPase KdpC subunit.